The chain runs to 160 residues: S-ribosylhomocysteine lyase (160 aa).

The Fe cation site is built by His-57, His-61, and Cys-127.

The protein belongs to the LuxS family. In terms of assembly, homodimer. Requires Fe cation as cofactor.

It carries out the reaction S-(5-deoxy-D-ribos-5-yl)-L-homocysteine = (S)-4,5-dihydroxypentane-2,3-dione + L-homocysteine. Functionally, involved in the synthesis of autoinducer 2 (AI-2) which is secreted by bacteria and is used to communicate both the cell density and the metabolic potential of the environment. The regulation of gene expression in response to changes in cell density is called quorum sensing. Catalyzes the transformation of S-ribosylhomocysteine (RHC) to homocysteine (HC) and 4,5-dihydroxy-2,3-pentadione (DPD). The polypeptide is S-ribosylhomocysteine lyase (Streptococcus pneumoniae (strain CGSP14)).